The primary structure comprises 364 residues: MDAYEYGELLKTLSKKMENISNIVKPDELKKRLDEIEEMQQDPNFWNDTANAGKISQEKTRTERILETYHNANDAVYDAIEYFEMAKAEKDEETLEMLYEDAETLKERTNALEVQMMLSGEHDSNNAIVSIHPGAGGTESQDWASMLYRMYLRWAERHGFKVEVLDYQPGEEAGIKDVSFIIKGENAYGYLKVENGIHRLVRISPFDSNAKRHTSFTSVMVSPEIDDDIDIEIEDKDLRIDTYRASGAGGQHVNKTESAIRITHEPTGIVVQCQNDRSQHKNKSAAMKMLKSRLYEYEMAKKQAEIDGVEKSDIGWGHQIRSYVMQPYQQVKDTRSGQAFTNVDAILDGDIDKLLEGVLISQAK.

N5-methylglutamine is present on glutamine 251.

It belongs to the prokaryotic/mitochondrial release factor family. In terms of processing, methylated by PrmC. Methylation increases the termination efficiency of RF2.

It is found in the cytoplasm. Peptide chain release factor 2 directs the termination of translation in response to the peptide chain termination codons UGA and UAA. The polypeptide is Peptide chain release factor 2 (Sulfurovum sp. (strain NBC37-1)).